Here is a 329-residue protein sequence, read N- to C-terminus: Phosphate acyltransferase (329 aa).

Belongs to the PlsX family. As to quaternary structure, homodimer. Probably interacts with PlsY.

It localises to the cytoplasm. The catalysed reaction is a fatty acyl-[ACP] + phosphate = an acyl phosphate + holo-[ACP]. Its pathway is lipid metabolism; phospholipid metabolism. Catalyzes the reversible formation of acyl-phosphate (acyl-PO(4)) from acyl-[acyl-carrier-protein] (acyl-ACP). This enzyme utilizes acyl-ACP as fatty acyl donor, but not acyl-CoA. The protein is Phosphate acyltransferase of Sulfurovum sp. (strain NBC37-1).